A 545-amino-acid polypeptide reads, in one-letter code: Methionine--tRNA ligase (545 aa).

The 'HIGH' region signature appears at 15–25; that stretch reads PYANGPIHIGH. The Zn(2+) site is built by Cys146, Cys149, Cys159, and Cys162. Residues 332–336 carry the 'KMSKS' region motif; the sequence is KLSKS. Lys335 lines the ATP pocket.

This sequence belongs to the class-I aminoacyl-tRNA synthetase family. MetG type 1 subfamily. Monomer. Requires Zn(2+) as cofactor.

The protein localises to the cytoplasm. The enzyme catalyses tRNA(Met) + L-methionine + ATP = L-methionyl-tRNA(Met) + AMP + diphosphate. Is required not only for elongation of protein synthesis but also for the initiation of all mRNA translation through initiator tRNA(fMet) aminoacylation. The protein is Methionine--tRNA ligase (metG) of Buchnera aphidicola subsp. Schizaphis graminum (strain Sg).